Reading from the N-terminus, the 617-residue chain is Electron transfer flavoprotein-ubiquinone oxidoreductase, mitochondrial (617 aa).

The N-terminal 33 residues, 1-33 (MLVPLAKLSCPAYQCFHALKIKKNYLPLCATRW), are a transit peptide targeting the mitochondrion. 71–85 (VVIVGAGPAGLSAAV) contributes to the FAD binding site. Residue Lys-96 is modified to N6-acetyllysine. Residues 109-130 (IGAHTLSGACLDPGAFKELFPD) lie within the membrane without spanning it. N6-acetyllysine is present on residues Lys-132 and Lys-223. 2 residues coordinate a ubiquinone: Gly-305 and Gly-306. Lys-357 bears the N6-acetyllysine mark. Residues 428–447 (MGLHVTEYEDNLKNSWVWKE) lie within the membrane without spanning it. Residue Ser-551 is modified to Phosphoserine. 4 residues coordinate [4Fe-4S] cluster: Cys-561, Cys-586, Cys-589, and Cys-592. The region spanning 577–606 (FRLQINAQNCVHCKTCDIKDPSQNINWVVP) is the 4Fe-4S ferredoxin-type domain.

Belongs to the ETF-QO/FixC family. In terms of assembly, monomer. It depends on [4Fe-4S] cluster as a cofactor. Requires FAD as cofactor.

It localises to the mitochondrion inner membrane. It catalyses the reaction a ubiquinone + reduced [electron-transfer flavoprotein] = a ubiquinol + oxidized [electron-transfer flavoprotein] + H(+). Its function is as follows. Accepts electrons from ETF and reduces ubiquinone. In Pongo abelii (Sumatran orangutan), this protein is Electron transfer flavoprotein-ubiquinone oxidoreductase, mitochondrial (ETFDH).